Here is a 186-residue protein sequence, read N- to C-terminus: Chromosomal replication initiator protein DnaA (186 aa).

A region of interest (domain I, interacts with DnaA modulators) is located at residue E1. E1 is a region of interest (domain II). Residues 1–99 (EFFKTFNALI…GALNKVTHTS (99 aa)) form a domain III, AAA+ region region. The segment at 100–186 (LIGRSMTVES…GRNFGGRDHT (87 aa)) is domain IV, binds dsDNA.

The protein belongs to the DnaA family. As to quaternary structure, oligomerizes as a right-handed, spiral filament on DNA at oriC.

It is found in the cytoplasm. Functionally, plays an essential role in the initiation and regulation of chromosomal replication. ATP-DnaA binds to the origin of replication (oriC) to initiate formation of the DNA replication initiation complex once per cell cycle. Binds the DnaA box (a 9 base pair repeat at the origin) and separates the double-stranded (ds)DNA. Forms a right-handed helical filament on oriC DNA; dsDNA binds to the exterior of the filament while single-stranded (ss)DNA is stabiized in the filament's interior. The ATP-DnaA-oriC complex binds and stabilizes one strand of the AT-rich DNA unwinding element (DUE), permitting loading of DNA polymerase. After initiation quickly degrades to an ADP-DnaA complex that is not apt for DNA replication. Binds acidic phospholipids. The polypeptide is Chromosomal replication initiator protein DnaA (Wolbachia sp).